Consider the following 341-residue polypeptide: MFSLPLHQSKLIFLLSFLLIKTLNAQPTYLLSYCYTSGNYTPNSSYKSNLDTLISVLDSQSSNKGFYSYASGSSPTTTVYGSYLCRGDISSSTCETCISRASKNVFIWCPVQKEAIIWYEECFLRYSSRKIFSILDQGPFVTWTSYDTTLYQFYFINTVEYRMDRLIQEAYSSSSYFAEETYHVSYLGEVYDLNGLVQCTPDLNQYDCYRCLKSAYNETKDCCYGKRFALVYSSNCMLTYKATFLAPPPPPPPPPPPPPPPQRLYGENDTPSSDESFSFKLGKVFRRIIAPVIAAVVIILVISVCSLCCCCIKKKKKANQREASIEIPTLNTGENLTVDHQ.

The N-terminal stretch at 1-25 (MFSLPLHQSKLIFLLSFLLIKTLNA) is a signal peptide. Gnk2-homologous domains lie at 28–131 (TYLL…SRKI) and 136–245 (DQGP…ATFL). 4 disulfides stabilise this stretch: C85–C94, C97–C122, C199–C208, and C211–C236. The span at 247–262 (PPPPPPPPPPPPPPPQ) shows a compositional bias: pro residues. Positions 247-274 (PPPPPPPPPPPPPPPQRLYGENDTPSSD) are disordered.

It belongs to the cysteine-rich repeat secretory protein family.

The protein resides in the secreted. In Arabidopsis thaliana (Mouse-ear cress), this protein is Cysteine-rich repeat secretory protein 1 (CRRSP1).